Here is a 462-residue protein sequence, read N- to C-terminus: Metal cation symporter ZIP8 (462 aa).

An N-terminal signal peptide occupies residues 1-19; that stretch reads MAPGRAVAGLLLLAATGLG. The Extracellular segment spans residues 20 to 132; that stretch reads RPSEGPELAF…PSFSEVWGYG (113 aa). Residues asparagine 40, asparagine 88, and asparagine 96 are each glycosylated (N-linked (GlcNAc...) asparagine). Residues 133–153 traverse the membrane as a helical segment; it reads FLSVTIINLASLLGLILTPLI. Residues 154 to 160 lie on the Cytoplasmic side of the membrane; sequence KKSYFPK. The chain crosses the membrane as a helical span at residues 161–181; that stretch reads ILTYFVGLAIGTLFSNAIFQL. The Extracellular portion of the chain corresponds to 182 to 191; sequence IPEAFGFNPK. A helical membrane pass occupies residues 192-212; that stretch reads IDNYVEKAVAVFGGFYMLFFV. Residues 213–367 lie on the Cytoplasmic side of the membrane; it reads ERTLKMLLKT…LNAGMSTRQA (155 aa). The XEXPHE-motif motif lies at 345–350; the sequence is EEFPHE. The chain crosses the membrane as a helical span at residues 368–388; that stretch reads LLFNFLSACSCYVGLAFGILV. Topologically, residues 389 to 390 are extracellular; sequence GN. The helical transmembrane segment at 391–411 threads the bilayer; that stretch reads NFAPNIIFALAGGMFLYISLA. Topologically, residues 412-431 are cytoplasmic; that stretch reads DMFPEMNDMLREKVTGRQTD. The helical transmembrane segment at 432–452 threads the bilayer; the sequence is FTFFMIQNAGMLTGFTAILLI. Residues 453–462 are Extracellular-facing; sequence TLYAGDIELQ.

The protein belongs to the ZIP transporter (TC 2.A.5) family. Homodimer. In terms of processing, N-glycosylated. N-glycosylation is not required for proper iron and zinc transport.

The protein localises to the cell membrane. It is found in the lysosome membrane. Its subcellular location is the apical cell membrane. It localises to the basolateral cell membrane. It carries out the reaction Zn(2+)(out) + 2 hydrogencarbonate(out) = Zn(2+)(in) + 2 hydrogencarbonate(in). The enzyme catalyses selenite(out) + Zn(2+)(out) + hydrogencarbonate(out) = selenite(in) + Zn(2+)(in) + hydrogencarbonate(in). It catalyses the reaction Mn(2+)(out) + 2 hydrogencarbonate(out) = Mn(2+)(in) + 2 hydrogencarbonate(in). The catalysed reaction is Fe(2+)(out) + 2 hydrogencarbonate(out) = Fe(2+)(in) + 2 hydrogencarbonate(in). It carries out the reaction Cd(2+)(out) + 2 hydrogencarbonate(out) = Cd(2+)(in) + 2 hydrogencarbonate(in). The enzyme catalyses Co(2+)(out) + 2 hydrogencarbonate(out) = Co(2+)(in) + 2 hydrogencarbonate(in). Functionally, electroneutral divalent metal cation:bicarbonate symporter of the plasma membrane mediating the cellular uptake of zinc and manganese, two divalent metal cations important for development, tissue homeostasis and immunity. Transports an electroneutral complex composed of a divalent metal cation and two bicarbonate anions or alternatively a bicarbonate and a selenite anion. Thereby, it also contributes to the cellular uptake of selenium, an essential trace metal and micronutrient. Also imports cadmium a non-essential metal which is cytotoxic and carcinogenic. May also transport iron and cobalt through membranes. Through zinc import, indirectly regulates the metal-dependent transcription factor MTF1 and the expression of some metalloproteases involved in cartilage catabolism and also probably heart development. Also indirectly regulates the expression of proteins involved in cell morphology and cytoskeleton organization. Indirectly controls innate immune function and inflammatory response by regulating zinc cellular uptake which in turn modulates the expression of genes specific of these processes. Protects, for instance, cells from injury and death at the onset of inflammation. By regulating zinc influx into monocytes also directly modulates their adhesion to endothelial cells and arteries. Reclaims manganese from the bile at the apical membrane of hepatocytes, thereby regulating the activity of the manganese-dependent enzymes through the systemic levels of the nutrient. Also participates in manganese reabsorption in the proximal tubule of the kidney. By mediating the extracellular uptake of manganese by cells of the blood-brain barrier, may also play a role in the transport of the micronutrient to the brain. With manganese cellular uptake also participates in mitochondrial proper function. Finally, also probably functions intracellularly, translocating zinc from lysosome to cytosol to indirectly enhance the expression of specific genes during TCR-mediated T cell activation. The sequence is that of Metal cation symporter ZIP8 from Rattus norvegicus (Rat).